The chain runs to 912 residues: LPS-assembly protein LptD (912 aa).

The first 27 residues, Met1–Ala27, serve as a signal peptide directing secretion.

This sequence belongs to the LptD family. In terms of assembly, component of the lipopolysaccharide transport and assembly complex. Interacts with LptE and LptA.

It is found in the cell outer membrane. Together with LptE, is involved in the assembly of lipopolysaccharide (LPS) at the surface of the outer membrane. The sequence is that of LPS-assembly protein LptD from Psychrobacter arcticus (strain DSM 17307 / VKM B-2377 / 273-4).